The primary structure comprises 416 residues: Serine hydroxymethyltransferase (416 aa).

Residues L118 and 122–124 (GHL) each bind (6S)-5,6,7,8-tetrahydrofolate. K226 bears the N6-(pyridoxal phosphate)lysine mark. (6S)-5,6,7,8-tetrahydrofolate is bound by residues E242 and 350 to 352 (SPF).

Belongs to the SHMT family. As to quaternary structure, homodimer. Pyridoxal 5'-phosphate is required as a cofactor.

It localises to the cytoplasm. The enzyme catalyses (6R)-5,10-methylene-5,6,7,8-tetrahydrofolate + glycine + H2O = (6S)-5,6,7,8-tetrahydrofolate + L-serine. It participates in one-carbon metabolism; tetrahydrofolate interconversion. The protein operates within amino-acid biosynthesis; glycine biosynthesis; glycine from L-serine: step 1/1. Its function is as follows. Catalyzes the reversible interconversion of serine and glycine with tetrahydrofolate (THF) serving as the one-carbon carrier. This reaction serves as the major source of one-carbon groups required for the biosynthesis of purines, thymidylate, methionine, and other important biomolecules. Also exhibits THF-independent aldolase activity toward beta-hydroxyamino acids, producing glycine and aldehydes, via a retro-aldol mechanism. This Wolinella succinogenes (strain ATCC 29543 / DSM 1740 / CCUG 13145 / JCM 31913 / LMG 7466 / NCTC 11488 / FDC 602W) (Vibrio succinogenes) protein is Serine hydroxymethyltransferase.